The sequence spans 395 residues: Phosphoglycerate kinase (395 aa).

Substrate-binding positions include 21-23 (DLN), R36, 59-62 (HLGR), R113, and R146. ATP contacts are provided by residues K197, E324, and 350-353 (GGDT).

The protein belongs to the phosphoglycerate kinase family. In terms of assembly, monomer.

The protein resides in the cytoplasm. The catalysed reaction is (2R)-3-phosphoglycerate + ATP = (2R)-3-phospho-glyceroyl phosphate + ADP. The protein operates within carbohydrate degradation; glycolysis; pyruvate from D-glyceraldehyde 3-phosphate: step 2/5. The protein is Phosphoglycerate kinase of Acinetobacter baylyi (strain ATCC 33305 / BD413 / ADP1).